Reading from the N-terminus, the 310-residue chain is MKGLVIKNTGSWYQVKTDNGQLVECKIKGNFRLKGIRSTNPVAVGDRVQIILNQEGTAFISEIEDRKNYIIRRSSNLSKQSHILAANLDQCMLVVTVNYPETSTTFIDRFLASAEAYRVPVKILFNKVDAYDEDELHYLDSLITLYTQIGYPCFKISALTGEGVDTIREELKGRVTLFSGHSGVGKSTLINALVPGLEVKTAEISAYHNKGMHTTTFSEMFPVPGDGYIIDTPGIKGFGTFDMEEEEIGHYFPEIFKTSANCKYGNCTHRQEPGCAVRKAVEEHYISESRYTSYLSMLEDKEEGKYRAAY.

One can recognise a CP-type G domain in the interval 77-238 (LSKQSHILAA…IIDTPGIKGF (162 aa)). GTP is bound by residues 126-129 (NKVD) and 180-188 (GHSGVGKST). Zn(2+)-binding residues include Cys262, Cys267, His269, and Cys275.

The protein belongs to the TRAFAC class YlqF/YawG GTPase family. RsgA subfamily. Monomer. Associates with 30S ribosomal subunit, binds 16S rRNA. It depends on Zn(2+) as a cofactor.

Its subcellular location is the cytoplasm. In terms of biological role, one of several proteins that assist in the late maturation steps of the functional core of the 30S ribosomal subunit. Helps release RbfA from mature subunits. May play a role in the assembly of ribosomal proteins into the subunit. Circularly permuted GTPase that catalyzes slow GTP hydrolysis, GTPase activity is stimulated by the 30S ribosomal subunit. The protein is Small ribosomal subunit biogenesis GTPase RsgA of Bacteroides fragilis (strain YCH46).